The chain runs to 1325 residues: Nucleoporin nup146 (1325 aa).

4 disordered regions span residues methionine 1–serine 20, valine 453–asparagine 474, glycine 758–histidine 951, and phenylalanine 973–leucine 994. The span at glutamine 763–leucine 778 shows a compositional bias: polar residues. Positions serine 779–glutamate 791 are enriched in basic and acidic residues. Residues threonine 792–lysine 801 show a composition bias toward polar residues. Residues glutamine 802–glycine 811 show a composition bias toward basic and acidic residues. Polar residues-rich tracts occupy residues alanine 816–serine 835 and phenylalanine 850–phenylalanine 861. A compositionally biased stretch (basic and acidic residues) spans leucine 867–aspartate 881. Phosphothreonine is present on threonine 899. Residues serine 927 to serine 937 show a composition bias toward acidic residues. Threonine 946 is subject to Phosphothreonine. Serine 1041, serine 1043, and serine 1044 each carry phosphoserine.

Its subcellular location is the cytoplasm. It localises to the nucleus. Functionally, functions as a component of the nuclear pore complex (NPC). NPC components, collectively referred to as nucleoporins (NUPs), can play the role of both NPC structural components and of docking or interaction partners for transiently associated nuclear transport factors. Active directional transport is assured by both, a Phe-Gly (FG) repeat affinity gradient for these transport factors across the NPC and a transport cofactor concentration gradient across the nuclear envelope. This Schizosaccharomyces pombe (strain 972 / ATCC 24843) (Fission yeast) protein is Nucleoporin nup146 (nup146).